The sequence spans 212 residues: MFNRVFTRSFASSLRAAASKAAAPPPVRLFGVEGTYATALYQAAAKNSSIDAAFQSLQKVESTVKKNPKLGHLLLNPALSLKDRNSVIDAIVETHKNLDGYVVNLLKVLSENNRLGCFEKIASDFGVLNDAHNGLLKGTVTSAEPLDPKSFKRIEKALSASKLVGQGKSLKLENVVKPEIKGGLIVELGDKTVDLSISTKIQKLNKVLEDSI.

The transit peptide at M1 to A17 directs the protein to the mitochondrion.

This sequence belongs to the ATPase delta chain family. As to quaternary structure, F-type ATPases have 2 components, CF(1) - the catalytic core - and CF(0) - the membrane proton channel. CF(1) has five subunits: alpha(3), beta(3), gamma(1), delta(1), epsilon(1). CF(0) has three main subunits: a, b and c.

Its subcellular location is the mitochondrion. The protein resides in the mitochondrion inner membrane. Functionally, mitochondrial membrane ATP synthase (F(1)F(0) ATP synthase or Complex V) produces ATP from ADP in the presence of a proton gradient across the membrane which is generated by electron transport complexes of the respiratory chain. F-type ATPases consist of two structural domains, F(1) - containing the extramembraneous catalytic core and F(0) - containing the membrane proton channel, linked together by a central stalk and a peripheral stalk. During catalysis, ATP synthesis in the catalytic domain of F(1) is coupled via a rotary mechanism of the central stalk subunits to proton translocation. Part of the complex F(0) domain and the peripheric stalk, which acts as a stator to hold the catalytic alpha(3)beta(3) subcomplex and subunit a/ATP6 static relative to the rotary elements. This chain is ATP synthase subunit 5, mitochondrial (ATP5), found in Saccharomyces cerevisiae (strain ATCC 204508 / S288c) (Baker's yeast).